Here is a 261-residue protein sequence, read N- to C-terminus: Phosphoinositide-3-kinase-interacting protein 1 (261 aa).

A signal peptide spans 1–21; sequence MLLAWVRTILVSNMLLAEAYG. Residues 22-166 lie on the Extracellular side of the membrane; the sequence is SGGCFWDNGH…NSKEKKDLGT (145 aa). One can recognise a Kringle domain in the interval 24–101; the sequence is GCFWDNGHLY…EKRPCQDLRC (78 aa). Cystine bridges form between C25-C101, C46-C82, and C70-C96. The span at 90-101 shows a compositional bias: basic and acidic residues; the sequence is APEKRPCQDLRC. Positions 90–122 are disordered; it reads APEKRPCQDLRCPDTTSQGLPTSATETEEAAEV. Residues 167–187 traverse the membrane as a helical segment; that stretch reads LGYVLGITMMVIIVVIGAGIV. At 188 to 261 the chain is on the cytoplasmic side; that stretch reads LGYTYKRGKD…LMGQAGTPGA (74 aa).

It is found in the cell membrane. Functionally, negative regulator of hepatic phosphatidylinositol 3-kinase (PI3K) activity. The polypeptide is Phosphoinositide-3-kinase-interacting protein 1 (PIK3IP1) (Bos taurus (Bovine)).